An 89-amino-acid chain; its full sequence is Large ribosomal subunit protein bL27 (89 aa).

The segment at 1–26 is disordered; that stretch reads MATKKAGGSSKNGRDSAGRRLGLKKT.

It belongs to the bacterial ribosomal protein bL27 family.

The sequence is that of Large ribosomal subunit protein bL27 from Orientia tsutsugamushi (strain Boryong) (Rickettsia tsutsugamushi).